A 198-amino-acid chain; its full sequence is Small ribosomal subunit protein eS1 (198 aa).

This sequence belongs to the eukaryotic ribosomal protein eS1 family.

In Methanospirillum hungatei JF-1 (strain ATCC 27890 / DSM 864 / NBRC 100397 / JF-1), this protein is Small ribosomal subunit protein eS1.